The chain runs to 870 residues: Patatin-like phospholipase domain-containing protein NCU11180 (870 aa).

Disordered stretches follow at residues 1 to 24 (MADD…PPEA) and 131 to 158 (KVIK…KGVA). Basic and acidic residues predominate over residues 131–141 (KVIKTDRDEKR). Residues 142–155 (NKRGKDRKNKKPRK) show a composition bias toward basic residues. A helical transmembrane segment spans residues 183–203 (WPFLLFVSFWIVGLGMAYLAT). The disordered stretch occupies residues 281-320 (EEVERELESQSQNSDSGVASGEETSNTKAGGGNNGNDKKT). Over residues 289-308 (SQSQNSDSGVASGEETSNTK) the composition is skewed to polar residues. In terms of domain architecture, PNPLA spans 399 to 590 (LCLSGGATFA…RTDIPIKSLN (192 aa)). The GXSXG signature appears at 430-434 (GTSGG). Residue Ser-432 is the Nucleophile of the active site. Asp-577 serves as the catalytic Proton acceptor. Disordered stretches follow at residues 735–786 (RRET…DRRG) and 804–870 (GREG…HSRT). The segment covering 818-834 (TEDELTMTELEGEDDDG) has biased composition (acidic residues).

The protein belongs to the PLPL family.

It is found in the membrane. Functionally, probable lipid hydrolase. The polypeptide is Patatin-like phospholipase domain-containing protein NCU11180 (Neurospora crassa (strain ATCC 24698 / 74-OR23-1A / CBS 708.71 / DSM 1257 / FGSC 987)).